The primary structure comprises 369 residues: DNA replication and repair protein RecF (369 aa).

30 to 37 (GQNGMGKT) provides a ligand contact to ATP.

This sequence belongs to the RecF family.

It localises to the cytoplasm. Its function is as follows. The RecF protein is involved in DNA metabolism; it is required for DNA replication and normal SOS inducibility. RecF binds preferentially to single-stranded, linear DNA. It also seems to bind ATP. In Bacteroides thetaiotaomicron (strain ATCC 29148 / DSM 2079 / JCM 5827 / CCUG 10774 / NCTC 10582 / VPI-5482 / E50), this protein is DNA replication and repair protein RecF.